The chain runs to 519 residues: 2,3-bisphosphoglycerate-independent phosphoglycerate mutase (519 aa).

Residues aspartate 18 and serine 68 each coordinate Mn(2+). The Phosphoserine intermediate role is filled by serine 68. Substrate contacts are provided by residues histidine 129, 159–160 (RD), arginine 191, arginine 197, 267–270 (RADR), and lysine 341. Residues aspartate 408, histidine 412, aspartate 449, histidine 450, and histidine 468 each coordinate Mn(2+).

This sequence belongs to the BPG-independent phosphoglycerate mutase family. In terms of assembly, monomer. Mn(2+) is required as a cofactor.

It carries out the reaction (2R)-2-phosphoglycerate = (2R)-3-phosphoglycerate. Its pathway is carbohydrate degradation; glycolysis; pyruvate from D-glyceraldehyde 3-phosphate: step 3/5. In terms of biological role, catalyzes the interconversion of 2-phosphoglycerate and 3-phosphoglycerate. The sequence is that of 2,3-bisphosphoglycerate-independent phosphoglycerate mutase from Coxiella burnetii (strain RSA 493 / Nine Mile phase I).